Here is a 718-residue protein sequence, read N- to C-terminus: Telomeric repeat-binding factor 2 (718 aa).

Disordered stretches follow at residues 1-22 (MAAK…RSDD) and 219-286 (NSER…GAPE). 2 stretches are compositionally biased toward basic and acidic residues: residues 8–22 (AAME…RSDD) and 219–228 (NSERAEEPKR). Residues 24–220 (EQAVNRWVLQ…LVTMMKSLNS (197 aa)) form a TRFH dimerization region. A run of 15 repeats spans residues 257-269 (GTLR…GGVA), 270-282 (GAPS…KDPT), 283-295 (GAPE…KDAV), 296-308 (RAPC…EDSQ), 309-321 (GTPR…RDVM), 322-334 (GAPS…KDLL), 335-347 (GAPK…RDVV), 348-360 (RAPS…KDPV), 361-373 (GTPG…RDVA), 374-386 (RAPS…KNLP), 387-399 (GAPE…KNTV), 400-412 (RAPS…KDLV), 413-425 (RAPK…RDVV), 426-438 (RAPS…KDTA), and 439-451 (GASE…SYPT). The interval 257–451 (GTLRRAETAG…EPMKSASYPT (195 aa)) is 15 X 13 AA approximate tandem repeats. 2 disordered regions span residues 342–455 (TARD…ASQP) and 524–641 (FNKL…WSDE). Basic and acidic residues predominate over residues 405–425 (AERRKDLVRAPKRAETARDVV). The span at 533–543 (PSPQQMSPSVS) shows a compositional bias: polar residues. The Nuclear localization signal motif lies at 545 to 550 (RTKRRK). Residues 584–595 (SQCSKSSESPDS) show a composition bias toward low complexity. Residues 615 to 630 (PVSTKRSSQQRWNSSY) show a composition bias toward polar residues. The HTH myb-type domain occupies 664-717 (KKQKWTVQESEWIKDGVRKYGEGRWKTISEKYPFQNRTSVQIKDRYRTMKKLGI). A DNA-binding region (H-T-H motif) is located at residues 688-713 (WKTISEKYPFQNRTSVQIKDRYRTMK).

Homodimer. Component of the shelterin complex (telosome). Interacts with TERF2IP/RAP1. As to expression, highly expressed in embryo.

The protein localises to the nucleus. Its subcellular location is the chromosome. It is found in the telomere. Its function is as follows. Binds the telomeric double-stranded 5'-TTAGGG-3' repeat and plays a central role in telomere maintenance and protection against end-to-end fusion of chromosomes. In addition to its telomeric DNA-binding role, required to recruit a number of factors and enzymes required for telomere protection, including the shelterin complex, TERF2IP/RAP1 and DCLRE1B/Apollo. Component of the shelterin complex (telosome) that is involved in the regulation of telomere length and protection. Shelterin associates with arrays of double-stranded 5'-TTAGGG-3' repeats added by telomerase and protects chromosome ends; without its protective activity, telomeres are no longer hidden from the DNA damage surveillance and chromosome ends are inappropriately processed by DNA repair pathways. Together with DCLRE1B/Apollo, plays a key role in telomeric loop (T loop) formation by generating 3' single-stranded overhang at the leading end telomeres: T loops have been proposed to protect chromosome ends from degradation and repair. Required both to recruit DCLRE1B/Apollo to telomeres and activate the exonuclease activity of DCLRE1B/Apollo. Together with DCLRE1B/Apollo, required to control the amount of DNA topoisomerase (TOP1, TOP2A and TOP2B) needed for telomere replication during fork passage and prevent aberrant telomere topology. Recruits TERF2IP/RAP1 to telomeres, thereby participating in to repressing homology-directed repair (HDR), which can affect telomere length. This chain is Telomeric repeat-binding factor 2 (TERF2), found in Gallus gallus (Chicken).